A 710-amino-acid chain; its full sequence is Early transcription factor 82 kDa subunit (710 aa).

The protein belongs to the poxviridae VETF large subunit family. As to quaternary structure, heterodimer of a 70 kDa and a 82 kDa subunit. Part of the early transcription complex composed of ETF, RAP94/OPG109, and the DNA-directed RNA polymerase.

Its subcellular location is the virion. Its function is as follows. Acts with RNA polymerase to initiate transcription from early gene promoters. Is recruited by the RPO-associated protein of 94 kDa RAP94/OPG109 to form the early transcription complex, which also contains the core RNA polymerase. ETF heterodimer binds to early gene promoters. This Homo sapiens (Human) protein is Early transcription factor 82 kDa subunit (OPG133).